A 616-amino-acid chain; its full sequence is TAF6-like RNA polymerase II p300/CBP-associated factor-associated factor 65 kDa subunit 6L (616 aa).

2 disordered regions span residues 399 to 432 (SLLL…EDPS) and 455 to 539 (FGTG…GTRD). Phosphoserine occurs at positions 494 and 500. An asymmetric dimethylarginine mark is found at R549, R555, and R587.

The protein belongs to the TAF6 family. As to quaternary structure, the PCAF complex is composed of a number of TBP-associated factors (TAFS), such as TAF5, TAF5L, TAF6, TAF6L, TAF9, TAF10 and TAF12, PCAF, and also PCAF-associated factors (PAFs), such as TADA2L/ADA2, TADA3L/ADA3 and SPT3. Component of the STAGA transcription coactivator-HAT complex, at least composed of SUPT3H, GCN5L2, TAF5L, TAF6L, SUPT7L, TADA3L, TAD1L, TAF10, TAF12, TRRAP and TAF9.

It is found in the nucleus. In terms of biological role, functions as a component of the PCAF complex. The PCAF complex is capable of efficiently acetylating histones in a nucleosomal context. The PCAF complex could be considered as the human version of the yeast SAGA complex. With TAF5L, acts as an epigenetic regulator essential for somatic reprogramming. Regulates target genes through H3K9ac deposition and MYC recruitment which trigger MYC regulatory network to orchestrate gene expression programs to control embryonic stem cell state. Functions with MYC to activate target gene expression through RNA polymerase II pause release. The chain is TAF6-like RNA polymerase II p300/CBP-associated factor-associated factor 65 kDa subunit 6L from Mus musculus (Mouse).